The primary structure comprises 183 residues: Translation initiation factor IF-3 (183 aa).

A compositionally biased stretch (polar residues) spans 1 to 13 (MKQPDRNQQQGAK). A disordered region spans residues 1–21 (MKQPDRNQQQGAKSNRPAIND).

This sequence belongs to the IF-3 family. As to quaternary structure, monomer.

It is found in the cytoplasm. IF-3 binds to the 30S ribosomal subunit and shifts the equilibrium between 70S ribosomes and their 50S and 30S subunits in favor of the free subunits, thus enhancing the availability of 30S subunits on which protein synthesis initiation begins. The sequence is that of Translation initiation factor IF-3 from Acinetobacter baumannii (strain AYE).